Consider the following 842-residue polypeptide: MSKYDFKKIEKKWQNYWDKHKTYKVNEDPNVPKEKRIYILDMFPYPSANGLHVGHPEGYTATDILTRYKLLNGFNVLHPMGFDSFGLPAENYAIQTGKHPKKITEKNIEKFKEQIKALGFAYDWDREIKTHDVNYYKWTQWIFLQLYKKGLAYTKEIPVWYCPDLGTVLANEEVIQTPDGPRSERGFHKVERKPLRQWLLKITKYAERLIRDLEEVDWPDSVKEMQKNWIGKSTGVEIEFLIKESKEKIKVFTTRPDTIFGVTYLVLAPEHPMVDKITKDELKPIISKYKDKEILKSDLERTSLEKDKTGIFTGAYAINPITKEEIPIWIGSYILGTYGTGAVMSVPAHDERDFEFAKKYNLPIKQVVSQTGTNEVLIKPFTENGISINTPTEFNNLKTIEVKTKVIKWLIENKMGQEKVNYKLRDWIFSRQRYWGEPIPILFDDNLNEIPLNDDELPLTLPDIENYKPSGTGESPLSKIKDWVNVKRNGKIYKRETNTMPQWAGSCWYYIRYLDPHNEKEFANKEKINYWMPVDLYIGGAEHSVLHLLYARFWHKVLYDLGYVNIKEPFRKLINQGMITSFAYQDENGILIPNDEVEKKDNKFFSKKNNKELKQIIAKMSKSLKNIINPDDIIKEYGADSMRIYEMFMGPLTDSKPWNTQGLIGIFRFLNKIWLIKNKELTNETPPKEIISELHKTIKKVTEDIETLNFNTAISTLMIFINELLKHEKNYLKIFRPISIILSPFAPHLGEELWEFMGEQSSIFKNAKWPKYDLNSIIDDTREIVLQVNGKTKDKIMIKKDTDEKTLKKIAFNNQKIIQNINNKQIIKIITVKDKLVNIVAK.

The 'HIGH' region motif lies at 44–55; the sequence is PYPSANGLHVGH. Residues 619-623 carry the 'KMSKS' region motif; it reads KMSKS. Residue Lys-622 coordinates ATP.

The protein belongs to the class-I aminoacyl-tRNA synthetase family.

The protein localises to the cytoplasm. It carries out the reaction tRNA(Leu) + L-leucine + ATP = L-leucyl-tRNA(Leu) + AMP + diphosphate. This Borrelia recurrentis (strain A1) protein is Leucine--tRNA ligase.